Here is a 418-residue protein sequence, read N- to C-terminus: Caveolae-associated protein 2 (418 aa).

The tract at residues 1–42 (MGEDAAQAEKFQHPNTDMLQEKPSSPSPMPSSTPSPSLNLGS) is disordered. Glycine 2 is subject to N-acetylglycine. Residues 2-168 (GEDAAQAEKF…IFQEESEIPA (167 aa)) form an interaction with CAVIN1 region. A phosphoserine mark is found at serine 27, serine 35, serine 37, and serine 51. Coiled coils occupy residues 61-87 (LLDK…INLE) and 126-268 (RAVR…VERR). Residues 62 to 100 (LDKLVNMLDAVRENQHNMEQRQINLEGSVKGIQNDLTKL) are leucine-zipper. A Phosphothreonine modification is found at threonine 196. 2 disordered regions span residues 200–238 (VDLS…SLKK) and 262–382 (IVSV…ALQQ). Phosphoserine is present on residues serine 203, serine 204, and serine 218. Residues 203 to 219 (SSDDELPRDEEALEDSA) show a composition bias toward acidic residues. Residues 220–238 (EEKMEESRAEKIKRSSLKK) are compositionally biased toward basic and acidic residues. A compositionally biased stretch (polar residues) spans 275–287 (LTPNHQKASSGKS). 6 positions are modified to phosphoserine: serine 283, serine 284, serine 287, serine 288, serine 293, and serine 296. Positions 303–321 (REGESSVENETKLEDQMQE) are enriched in basic and acidic residues. Phosphoserine occurs at positions 327, 336, 359, and 363. A compositionally biased stretch (polar residues) spans 355–366 (RGNNSAVGSNAD). Residue threonine 368 is modified to Phosphothreonine. A compositionally biased stretch (acidic residues) spans 368-377 (TIEEDEEEEP). Tyrosine 388 is modified (phosphotyrosine). 2 positions are modified to phosphoserine: serine 390 and serine 396. The disordered stretch occupies residues 396–418 (SEEMEEPSEKQVQPAVLHVDQTA).

This sequence belongs to the CAVIN family. As to quaternary structure, component of the CAVIN complex composed of CAVIN1, CAVIN2, CAVIN3 and CAVIN4. Binds to PRKCA in the presence of phosphatidylserine. Interacts with CAVIN4; this augments the transactivation of NPPA by CAVIN4. Interacts with CAVIN1. Interacts with CAV3. The N-terminus is blocked. Heart, adipose tissue, lung and endothelial cells (at protein level). Highly expressed in kidney and expressed at lower levels in liver, spleen, thymus, stomach, intestine and uterus.

The protein localises to the cytoplasm. It localises to the cytosol. It is found in the membrane. The protein resides in the caveola. In terms of biological role, plays an important role in caveolar biogenesis and morphology. Regulates caveolae morphology by inducing membrane curvature within caveolae. Plays a role in caveola formation in a tissue-specific manner. Required for the formation of caveolae in the lung and fat endothelia but not in the heart endothelia. Negatively regulates the size or stability of CAVIN complexes in the lung endothelial cells. May play a role in targeting PRKCA to caveolae. The sequence is that of Caveolae-associated protein 2 (Cavin2) from Mus musculus (Mouse).